A 465-amino-acid chain; its full sequence is MAP kinase-interacting serine/threonine-protein kinase 1 (465 aa).

Residues 1 to 11 show a composition bias toward basic and acidic residues; that stretch reads MVSSQKLEKPI. The interval 1 to 40 is disordered; the sequence is MVSSQKLEKPIEMGSSEPLPIADGDRRRKKKRRGRATDSL. The residue at position 39 (Ser-39) is a Phosphoserine. The 326-residue stretch at 49 to 374 folds into the Protein kinase domain; sequence KLTSELLGEG…AAQVLQHPWV (326 aa). Residues 55 to 63 and Lys-78 contribute to the ATP site; that span reads LGEGAYAKV. Positions 185–203 are enriched in polar residues; that stretch reads APTSLGSSDPPTSASQVAG. A disordered region spans residues 185–204; that stretch reads APTSLGSSDPPTSASQVAGT. Asp-211 acts as the Proton acceptor in catalysis. A phosphoserine mark is found at Ser-221 and Ser-226. Thr-250, Thr-255, and Thr-385 each carry phosphothreonine. Positions 446 to 465 are disordered; it reads RRRALAQAGRGEDRSPPTAL. Over residues 455–465 the composition is skewed to basic and acidic residues; that stretch reads RGEDRSPPTAL. At Ser-460 the chain carries Phosphoserine.

This sequence belongs to the protein kinase superfamily. CAMK Ser/Thr protein kinase family. In terms of assembly, interacts with the C-terminal regions of EIF4G1 and EIF4G2. Also binds to dephosphorylated ERK1 and ERK2, and to the p38 kinases. Mg(2+) is required as a cofactor. Dual phosphorylation of Thr-250 and Thr-255 activates the kinase. Phosphorylation of Thr-385 activates the kinase. MAPK3/ERK1 is one of the kinases which activate MKNK1/MNK1. Phosphorylation by PAK2 leads to a reduced phosphorylation of EIF4G1. As to expression, ubiquitous.

It is found in the cytoplasm. The protein localises to the nucleus. The catalysed reaction is L-seryl-[protein] + ATP = O-phospho-L-seryl-[protein] + ADP + H(+). It carries out the reaction L-threonyl-[protein] + ATP = O-phospho-L-threonyl-[protein] + ADP + H(+). With respect to regulation, phosphorylated and activated by the p38 kinases and kinases in the Erk pathway. Its function is as follows. May play a role in the response to environmental stress and cytokines. Appears to regulate translation by phosphorylating EIF4E, thus increasing the affinity of this protein for the 7-methylguanosine-containing mRNA cap. This is MAP kinase-interacting serine/threonine-protein kinase 1 (MKNK1) from Homo sapiens (Human).